Here is a 153-residue protein sequence, read N- to C-terminus: 3-hydroxyacyl-[acyl-carrier-protein] dehydratase FabZ (153 aa).

His54 is an active-site residue.

It belongs to the thioester dehydratase family. FabZ subfamily.

It localises to the cytoplasm. It carries out the reaction a (3R)-hydroxyacyl-[ACP] = a (2E)-enoyl-[ACP] + H2O. Involved in unsaturated fatty acids biosynthesis. Catalyzes the dehydration of short chain beta-hydroxyacyl-ACPs and long chain saturated and unsaturated beta-hydroxyacyl-ACPs. The polypeptide is 3-hydroxyacyl-[acyl-carrier-protein] dehydratase FabZ (Shewanella amazonensis (strain ATCC BAA-1098 / SB2B)).